The sequence spans 401 residues: S-adenosylmethionine synthase (401 aa).

An ATP-binding site is contributed by H16. D18 contributes to the Mg(2+) binding site. E44 serves as a coordination point for K(+). L-methionine-binding residues include E57 and Q100. The flexible loop stretch occupies residues 100 to 110 (QSPDIAQGVNE). ATP is bound by residues 174 to 176 (DAK), 241 to 242 (RF), D250, 256 to 257 (RK), A273, and K277. D250 contributes to the L-methionine binding site. K281 serves as a coordination point for L-methionine.

The protein belongs to the AdoMet synthase family. Homotetramer; dimer of dimers. It depends on Mg(2+) as a cofactor. Requires K(+) as cofactor.

The protein resides in the cytoplasm. The enzyme catalyses L-methionine + ATP + H2O = S-adenosyl-L-methionine + phosphate + diphosphate. The protein operates within amino-acid biosynthesis; S-adenosyl-L-methionine biosynthesis; S-adenosyl-L-methionine from L-methionine: step 1/1. In terms of biological role, catalyzes the formation of S-adenosylmethionine (AdoMet) from methionine and ATP. The overall synthetic reaction is composed of two sequential steps, AdoMet formation and the subsequent tripolyphosphate hydrolysis which occurs prior to release of AdoMet from the enzyme. In Streptococcus equi subsp. zooepidemicus (strain H70), this protein is S-adenosylmethionine synthase.